Consider the following 250-residue polypeptide: Probable transcriptional regulatory protein Paes_0496 (250 aa).

This sequence belongs to the TACO1 family.

The protein localises to the cytoplasm. The chain is Probable transcriptional regulatory protein Paes_0496 from Prosthecochloris aestuarii (strain DSM 271 / SK 413).